We begin with the raw amino-acid sequence, 186 residues long: ATP synthase subunit delta (186 aa).

The protein belongs to the ATPase delta chain family. As to quaternary structure, F-type ATPases have 2 components, F(1) - the catalytic core - and F(0) - the membrane proton channel. F(1) has five subunits: alpha(3), beta(3), gamma(1), delta(1), epsilon(1). CF(0) has four main subunits: a(1), b(1), b'(1) and c(10-14). The alpha and beta chains form an alternating ring which encloses part of the gamma chain. F(1) is attached to F(0) by a central stalk formed by the gamma and epsilon chains, while a peripheral stalk is formed by the delta, b and b' chains.

It localises to the cell inner membrane. In terms of biological role, f(1)F(0) ATP synthase produces ATP from ADP in the presence of a proton or sodium gradient. F-type ATPases consist of two structural domains, F(1) containing the extramembraneous catalytic core and F(0) containing the membrane proton channel, linked together by a central stalk and a peripheral stalk. During catalysis, ATP synthesis in the catalytic domain of F(1) is coupled via a rotary mechanism of the central stalk subunits to proton translocation. This protein is part of the stalk that links CF(0) to CF(1). It either transmits conformational changes from CF(0) to CF(1) or is implicated in proton conduction. This is ATP synthase subunit delta from Rhodopseudomonas palustris (strain BisB5).